Reading from the N-terminus, the 505-residue chain is Maturase K (505 aa).

The protein belongs to the intron maturase 2 family. MatK subfamily.

It is found in the plastid. Its subcellular location is the chloroplast. In terms of biological role, usually encoded in the trnK tRNA gene intron. Probably assists in splicing its own and other chloroplast group II introns. In Idiospermum australiense (Ribbonwood tree), this protein is Maturase K.